The sequence spans 451 residues: Tubulin alpha-1 chain (451 aa).

GTP is bound at residue Gln-11. N6-acetyllysine is present on Lys-40. Residues Glu-71, Thr-145, Thr-179, Asn-206, and Asn-228 each contribute to the GTP site. Position 71 (Glu-71) interacts with Mg(2+). The active site involves Glu-254. The disordered stretch occupies residues Glu-429–Tyr-451. Residues Asp-431–Tyr-451 show a composition bias toward acidic residues.

Belongs to the tubulin family. Dimer of alpha and beta chains. A typical microtubule is a hollow water-filled tube with an outer diameter of 25 nm and an inner diameter of 15 nM. Alpha-beta heterodimers associate head-to-tail to form protofilaments running lengthwise along the microtubule wall with the beta-tubulin subunit facing the microtubule plus end conferring a structural polarity. Microtubules usually have 13 protofilaments but different protofilament numbers can be found in some organisms and specialized cells. Requires Mg(2+) as cofactor. Undergoes a tyrosination/detyrosination cycle, the cyclic removal and re-addition of a C-terminal tyrosine residue by the enzymes tubulin tyrosine carboxypeptidase (TTCP) and tubulin tyrosine ligase (TTL), respectively. Post-translationally, acetylation of alpha chains at Lys-40 stabilizes microtubules and affects affinity and processivity of microtubule motors. This modification has a role in multiple cellular functions, ranging from cell motility, cell cycle progression or cell differentiation to intracellular trafficking and signaling.

The protein localises to the cytoplasm. It is found in the cytoskeleton. It catalyses the reaction GTP + H2O = GDP + phosphate + H(+). Its function is as follows. Tubulin is the major constituent of microtubules, a cylinder consisting of laterally associated linear protofilaments composed of alpha- and beta-tubulin heterodimers. Microtubules grow by the addition of GTP-tubulin dimers to the microtubule end, where a stabilizing cap forms. Below the cap, tubulin dimers are in GDP-bound state, owing to GTPase activity of alpha-tubulin. The polypeptide is Tubulin alpha-1 chain (TUBA1) (Anemia phyllitidis (Fern)).